Here is a 311-residue protein sequence, read N- to C-terminus: Methionyl-tRNA formyltransferase (311 aa).

Residue 112–115 participates in (6S)-5,6,7,8-tetrahydrofolate binding; it reads SLLP.

It belongs to the Fmt family.

It carries out the reaction L-methionyl-tRNA(fMet) + (6R)-10-formyltetrahydrofolate = N-formyl-L-methionyl-tRNA(fMet) + (6S)-5,6,7,8-tetrahydrofolate + H(+). In terms of biological role, attaches a formyl group to the free amino group of methionyl-tRNA(fMet). The formyl group appears to play a dual role in the initiator identity of N-formylmethionyl-tRNA by promoting its recognition by IF2 and preventing the misappropriation of this tRNA by the elongation apparatus. The chain is Methionyl-tRNA formyltransferase from Geobacter metallireducens (strain ATCC 53774 / DSM 7210 / GS-15).